The sequence spans 316 residues: PAK4-inhibitor inka2 (316 aa).

Disordered regions lie at residues 43–74 (RSSP…SHRT) and 108–130 (YSEV…ESET). Positions 65–74 (RRDNRISHRT) are enriched in basic and acidic residues. Over residues 119 to 129 (EEDDIVEEESE) the composition is skewed to acidic residues. The segment at 182–219 (DSQDWTGCLLSQSRSRQPLVLGDNSFADLVKQWMDLPE) is inka box.

Belongs to the INKA family.

It localises to the nucleus. In terms of biological role, inhibitor of the serine/threonine-protein kinase pak4/pak5. Acts by binding pak4/pak5 in a substrate-like manner, inhibiting the protein kinase activity. The polypeptide is PAK4-inhibitor inka2 (Xenopus laevis (African clawed frog)).